We begin with the raw amino-acid sequence, 505 residues long: RNA-splicing ligase RtcB homolog (505 aa).

The Mn(2+) site is built by Asp119, Cys122, His227, His259, and His353. 226-230 (NHYAE) contributes to the GMP binding site. GMP contacts are provided by residues 353-354 (HN), 402-405 (GGTM), Ser409, 428-431 (HGAG), and Lys504. The active-site GMP-histidine intermediate is the His428.

This sequence belongs to the RtcB family. Catalytic component of the tRNA-splicing ligase complex. The cofactor is Mn(2+).

Its subcellular location is the nucleus. It localises to the cytoplasm. The enzyme catalyses a 3'-end 3'-phospho-ribonucleotide-RNA + a 5'-end dephospho-ribonucleoside-RNA + GTP = a ribonucleotidyl-ribonucleotide-RNA + GMP + diphosphate. It carries out the reaction a 3'-end 2',3'-cyclophospho-ribonucleotide-RNA + a 5'-end dephospho-ribonucleoside-RNA + GTP + H2O = a ribonucleotidyl-ribonucleotide-RNA + GMP + diphosphate + H(+). Catalytic subunit of the tRNA-splicing ligase complex that acts by directly joining spliced tRNA halves to mature-sized tRNAs by incorporating the precursor-derived splice junction phosphate into the mature tRNA as a canonical 3',5'-phosphodiester. May act as an RNA ligase with broad substrate specificity, and may function toward other RNAs. This chain is RNA-splicing ligase RtcB homolog, found in Xenopus tropicalis (Western clawed frog).